A 233-amino-acid polypeptide reads, in one-letter code: Large ribosomal subunit protein uL1 (233 aa).

The protein belongs to the universal ribosomal protein uL1 family. In terms of assembly, part of the 50S ribosomal subunit.

Functionally, binds directly to 23S rRNA. The L1 stalk is quite mobile in the ribosome, and is involved in E site tRNA release. Protein L1 is also a translational repressor protein, it controls the translation of the L11 operon by binding to its mRNA. This is Large ribosomal subunit protein uL1 from Thermotoga sp. (strain RQ2).